The following is a 368-amino-acid chain: S-adenosylmethionine:tRNA ribosyltransferase-isomerase (368 aa).

This sequence belongs to the QueA family. Monomer.

Its subcellular location is the cytoplasm. It catalyses the reaction 7-aminomethyl-7-carbaguanosine(34) in tRNA + S-adenosyl-L-methionine = epoxyqueuosine(34) in tRNA + adenine + L-methionine + 2 H(+). Its pathway is tRNA modification; tRNA-queuosine biosynthesis. Its function is as follows. Transfers and isomerizes the ribose moiety from AdoMet to the 7-aminomethyl group of 7-deazaguanine (preQ1-tRNA) to give epoxyqueuosine (oQ-tRNA). The chain is S-adenosylmethionine:tRNA ribosyltransferase-isomerase from Methylorubrum extorquens (strain CM4 / NCIMB 13688) (Methylobacterium extorquens).